The primary structure comprises 76 residues: Conotoxin Am6.3 (76 aa).

The N-terminal stretch at 1–22 (MKLTCMMIIAVLFLTAWTFATA) is a signal peptide. 3 disulfide bridges follow: C52/C67, C59/C71, and C66/C75.

Belongs to the conotoxin O1 superfamily. Is not hydroxylated. In terms of tissue distribution, expressed by the venom duct.

It localises to the secreted. Probable toxin that inhibits ion channels. The chain is Conotoxin Am6.3 from Conus amadis (Amadis cone).